A 323-amino-acid chain; its full sequence is tRNA U34 carboxymethyltransferase (323 aa).

Carboxy-S-adenosyl-L-methionine-binding positions include Lys-91, Trp-105, Lys-110, Gly-130, Asp-152–Thr-154, Ile-181–Glu-182, Met-196, Tyr-200, and Arg-315.

It belongs to the class I-like SAM-binding methyltransferase superfamily. CmoB family. Homotetramer.

It catalyses the reaction carboxy-S-adenosyl-L-methionine + 5-hydroxyuridine(34) in tRNA = 5-carboxymethoxyuridine(34) in tRNA + S-adenosyl-L-homocysteine + H(+). Catalyzes carboxymethyl transfer from carboxy-S-adenosyl-L-methionine (Cx-SAM) to 5-hydroxyuridine (ho5U) to form 5-carboxymethoxyuridine (cmo5U) at position 34 in tRNAs. This is tRNA U34 carboxymethyltransferase from Escherichia coli O8 (strain IAI1).